We begin with the raw amino-acid sequence, 211 residues long: Urease accessory protein UreE (211 aa).

A disordered region spans residues 134 to 211 (FDPEGGAYAP…DHHGHGHEHK (78 aa)). Positions 147-202 (PSHDHAGHDHAHDSHAHHDHDHGKHAQHDHGKHDHAHHDHAAHDDHHVHDEHCGHD) are enriched in basic and acidic residues.

Belongs to the UreE family.

Its subcellular location is the cytoplasm. Its function is as follows. Involved in urease metallocenter assembly. Binds nickel. Probably functions as a nickel donor during metallocenter assembly. This Rhodopseudomonas palustris (strain BisB18) protein is Urease accessory protein UreE.